The primary structure comprises 410 residues: Argininosuccinate synthase (410 aa).

ATP contacts are provided by residues 10 to 18 (AYSGGLDTS) and Ala37. 2 residues coordinate L-citrulline: Tyr90 and Ser95. Residue Gly120 coordinates ATP. L-aspartate-binding residues include Thr122, Asn126, and Asp127. Asn126 is a binding site for L-citrulline. L-citrulline contacts are provided by Arg130, Ser182, Ser191, Glu267, and Tyr279.

Belongs to the argininosuccinate synthase family. Type 1 subfamily. Homotetramer.

Its subcellular location is the cytoplasm. The enzyme catalyses L-citrulline + L-aspartate + ATP = 2-(N(omega)-L-arginino)succinate + AMP + diphosphate + H(+). It functions in the pathway amino-acid biosynthesis; L-arginine biosynthesis; L-arginine from L-ornithine and carbamoyl phosphate: step 2/3. The sequence is that of Argininosuccinate synthase from Polynucleobacter asymbioticus (strain DSM 18221 / CIP 109841 / QLW-P1DMWA-1) (Polynucleobacter necessarius subsp. asymbioticus).